Consider the following 197-residue polypeptide: MSLGRLCRLLMPALLCGALAAPGLAGTMCASRDDWRCAGSMHEFSAKVLDGHTVNLDKYRGFVCIVTNVASQUGKTEVNYTQLVDLHARYAECGLRFLAFPCNQFGKQEPGSNEEIKEFAAGYNVKFDMFSKICVNGDDAHPLWKWMKIQPKGKGILGNAIKWNFTKFLFDKNGCVVKRYGPMEEPLVLEKDLPHYF.

Residue S40 is modified to Phosphoserine. U73 is an active-site residue. Residue U73 is a non-standard amino acid, selenocysteine.

This sequence belongs to the glutathione peroxidase family. Monomer. Has a tendency to form higher mass oligomers. Interacts with FUNDC1; this interaction promotes GPX4 recruitment into mitochondria through TOM/TIM complex where it is degraded by mitophagy.

Its subcellular location is the mitochondrion. It is found in the cytoplasm. The catalysed reaction is a hydroperoxy polyunsaturated fatty acid + 2 glutathione = a hydroxy polyunsaturated fatty acid + glutathione disulfide + H2O. It catalyses the reaction 2 glutathione + H2O2 = glutathione disulfide + 2 H2O. It carries out the reaction tert-butyl hydroperoxide + 2 glutathione = tert-butanol + glutathione disulfide + H2O. The enzyme catalyses cumene hydroperoxide + 2 glutathione = 2-phenylpropan-2-ol + glutathione disulfide + H2O. The catalysed reaction is (9S)-hydroperoxy-(10E,12Z)-octadecadienoate + 2 glutathione = (9S)-hydroxy-(10E,12Z)-octadecadienoate + glutathione disulfide + H2O. It catalyses the reaction (13S)-hydroperoxy-(9Z,11E)-octadecadienoate + 2 glutathione = (13S)-hydroxy-(9Z,11E)-octadecadienoate + glutathione disulfide + H2O. It carries out the reaction (5S)-hydroperoxy-(6E,8Z,11Z,14Z)-eicosatetraenoate + 2 glutathione = (5S)-hydroxy-(6E,8Z,11Z,14Z)-eicosatetraenoate + glutathione disulfide + H2O. The enzyme catalyses (12R)-hydroperoxy-(5Z,8Z,10E,14Z)-eicosatetraenoate + 2 glutathione = (12R)-hydroxy-(5Z,8Z,10E,14Z)-eicosatetraenoate + glutathione disulfide + H2O. The catalysed reaction is (12S)-hydroperoxy-(5Z,8Z,10E,14Z)-eicosatetraenoate + 2 glutathione = (12S)-hydroxy-(5Z,8Z,10E,14Z)-eicosatetraenoate + glutathione disulfide + H2O. It catalyses the reaction (15S)-hydroperoxy-(5Z,8Z,11Z,13E)-eicosatetraenoate + 2 glutathione = (15S)-hydroxy-(5Z,8Z,11Z,13E)-eicosatetraenoate + glutathione disulfide + H2O. It carries out the reaction (5S)-hydroperoxy-(6E,8Z,11Z,14Z,17Z)-eicosapentaenoate + 2 glutathione = (5S)-hydroxy-(6E,8Z,11Z,14Z,17Z)-eicosapentaenoate + glutathione disulfide + H2O. The enzyme catalyses (12S)-hydroperoxy-(5Z,8Z,10E,14Z,17Z)-eicosapentaenoate + 2 glutathione = (12S)-hydroxy-(5Z,8Z,10E,14Z,17Z)-eicosapentaenoate + glutathione disulfide + H2O. The catalysed reaction is (15S)-hydroperoxy-(5Z,8Z,11Z,13E,17Z)-eicosapentaenoate + 2 glutathione = (15S)-hydroxy-(5Z,8Z,11Z,13E,17Z)-eicosapentaenoate + glutathione disulfide + H2O. It catalyses the reaction (15S)-hydroperoxy-(11Z,13E)-eicosadienoate + 2 glutathione = (15S)-hydroxy-(11Z,13E)-eicosadienoate + glutathione disulfide + H2O. It carries out the reaction (17S)-hydroperoxy-(4Z,7Z,10Z,13Z,15E,19Z)-docosahexaenoate + 2 glutathione = (17S)-hydroxy-(4Z,7Z,10Z,13Z,15E,19Z)-docosahexaenoate + glutathione disulfide + H2O. The enzyme catalyses a hydroperoxy-1,2-diacyl-glycero-3-phosphocholine + 2 glutathione = a hydroxy-1,2-diacyl-glycero-3-phosphocholine + glutathione disulfide + H2O. Its function is as follows. Essential antioxidant peroxidase that directly reduces phospholipid hydroperoxide even if they are incorporated in membranes and lipoproteins. Can also reduce fatty acid hydroperoxide, cholesterol hydroperoxide and thymine hydroperoxide. Plays a key role in protecting cells from oxidative damage by preventing membrane lipid peroxidation. Required to prevent cells from ferroptosis, a non-apoptotic cell death resulting from an iron-dependent accumulation of lipid reactive oxygen species. The presence of selenocysteine (Sec) versus Cys at the active site is essential for life: it provides resistance to overoxidation and prevents cells against ferroptosis. The presence of Sec at the active site is also essential for the survival of a specific type of parvalbumin-positive interneurons, thereby preventing against fatal epileptic seizures. May be required to protect cells from the toxicity of ingested lipid hydroperoxides. Required for normal sperm development and male fertility. Essential for maturation and survival of photoreceptor cells. Plays a role in a primary T-cell response to viral and parasitic infection by protecting T-cells from ferroptosis and by supporting T-cell expansion. Plays a role of glutathione peroxidase in platelets in the arachidonic acid metabolism. Reduces hydroperoxy ester lipids formed by a 15-lipoxygenase that may play a role as down-regulator of the cellular 15-lipoxygenase pathway. Can also reduce small soluble hydroperoxides such as H2O2, cumene hydroperoxide and tert-butyl hydroperoxide. The sequence is that of Phospholipid hydroperoxide glutathione peroxidase from Hylobates lar (Lar gibbon).